The following is a 186-amino-acid chain: Chromosome-anchoring protein RacA (186 aa).

The H-T-H motif DNA-binding region spans 3–23 (TADAANELGVSTKTVQRWVKQ). The stretch at 90-170 (ERLEERLQRF…NRREKDTAVR (81 aa)) forms a coiled coil. Residues 158–186 (ESMNRREKDTAVRREEKKPKSKLKSIFSF) are disordered. Over residues 160–175 (MNRREKDTAVRREEKK) the composition is skewed to basic and acidic residues.

This sequence belongs to the RacA family.

Its subcellular location is the cytoplasm. Its function is as follows. Required for the formation of axial filaments and for anchoring the origin regions at the cell poles in sporulating cells, thus ensuring proper chromosome segregation in the prespore. Binds in a dispersed manner throughout the chromosome but preferentially to sites clustered in the origin portion of the chromosome, causing condensation of the chromosome and its remodeling into an elongated, anchored structure. The polypeptide is Chromosome-anchoring protein RacA (Bacillus licheniformis (strain ATCC 14580 / DSM 13 / JCM 2505 / CCUG 7422 / NBRC 12200 / NCIMB 9375 / NCTC 10341 / NRRL NRS-1264 / Gibson 46)).